A 1028-amino-acid polypeptide reads, in one-letter code: Endosome/lysosome-associated apoptosis and autophagy regulator family member 2 (1028 aa).

An N-terminal signal peptide occupies residues 1–47; the sequence is MLLLTLRRAKGRDRGRPAGGPRRALSLPWSPAWICCWALAGCQAVWA. Residues 48–928 are Extracellular-facing; that stretch reads GDSSSSGRPL…TCETVDFWLK (881 aa). Residue N168 is glycosylated (N-linked (GlcNAc...) asparagine). 3 cysteine pairs are disulfide-bonded: C292–C309, C322–C345, and C325–C357. N404 and N690 each carry an N-linked (GlcNAc...) asparagine glycan. The MRH domain occupies 671-876; it reads SDCFFYHEKE…LWESAEACPL (206 aa). Intrachain disulfides connect C673/C719, C729/C757, C826/C862, and C838/C874. The chain crosses the membrane as a helical span at residues 929–949; that stretch reads VGAGVGAFTAVLLVALTCYFW. Residues 950–1028 are Cytoplasmic-facing; it reads KKNQKLEYKY…QLKSSRCPNI (79 aa). The residue at position 1017 (S1017) is a Phosphoserine.

Belongs to the ELAPOR family.

Its subcellular location is the cell membrane. In terms of biological role, functions as a regulator of the BMP signaling pathway and may be involved in epidermal differentiation. The protein is Endosome/lysosome-associated apoptosis and autophagy regulator family member 2 of Mus musculus (Mouse).